The primary structure comprises 83 residues: Protein CASPARIAN STRIP INTEGRITY FACTOR 1 (83 aa).

Positions 1 to 22 are cleaved as a signal peptide; it reads MGMSPLTVKKLGFIFMIVSASA. Residues 59 to 83 form a disordered region; that stretch reads MNTKDYGNNSPSPRLERPPFKLIPN. Tyr-64 is modified (sulfotyrosine). Hydroxyproline is present on residues Pro-69 and Pro-71.

Interacts with the specific receptor kinases GSO1 and GSO2. In terms of tissue distribution, expressed exclusively in the root stele.

In terms of biological role, peptide hormone required for contiguous Casparian strip diffusion barrier formation in roots via the regulation of CASPs protein expression and distribution in a GSO1-GSO2 signaling pathway. The Casparian strip is required for ion homeostasis (e.g. iron and potassium ions). The sequence is that of Protein CASPARIAN STRIP INTEGRITY FACTOR 1 from Arabidopsis thaliana (Mouse-ear cress).